Consider the following 279-residue polypeptide: uncharacterized protein (279 aa).

A signal peptide spans 1-31 (MLVQSRTLVTAILSCSLVFGTTVNGASVAIA).

This is an uncharacterized protein from Corynebacterium glutamicum (strain ATCC 13032 / DSM 20300 / JCM 1318 / BCRC 11384 / CCUG 27702 / LMG 3730 / NBRC 12168 / NCIMB 10025 / NRRL B-2784 / 534).